A 370-amino-acid polypeptide reads, in one-letter code: 3-dehydroquinate synthase (370 aa).

Residues 108 to 112, 132 to 133, Lys145, and Lys154 contribute to the NAD(+) site; these read GVVGD and TT. Zn(2+)-binding residues include Glu187, His250, and His268.

It belongs to the sugar phosphate cyclases superfamily. Dehydroquinate synthase family. Co(2+) serves as cofactor. The cofactor is Zn(2+). It depends on NAD(+) as a cofactor.

It localises to the cytoplasm. The enzyme catalyses 7-phospho-2-dehydro-3-deoxy-D-arabino-heptonate = 3-dehydroquinate + phosphate. The protein operates within metabolic intermediate biosynthesis; chorismate biosynthesis; chorismate from D-erythrose 4-phosphate and phosphoenolpyruvate: step 2/7. Catalyzes the conversion of 3-deoxy-D-arabino-heptulosonate 7-phosphate (DAHP) to dehydroquinate (DHQ). This chain is 3-dehydroquinate synthase, found in Caulobacter vibrioides (strain NA1000 / CB15N) (Caulobacter crescentus).